We begin with the raw amino-acid sequence, 241 residues long: Probable transcriptional regulatory protein Neut_0281 (241 aa).

The protein belongs to the TACO1 family.

The protein localises to the cytoplasm. The chain is Probable transcriptional regulatory protein Neut_0281 from Nitrosomonas eutropha (strain DSM 101675 / C91 / Nm57).